We begin with the raw amino-acid sequence, 814 residues long: Cadherin-15 (814 aa).

Residues 1 to 21 (MDAAFLLVLGLLAQSLCLSLG) form the signal peptide. Residues 22 to 60 (VPGWRRPTTLYPWRRAPALSRVRRAWVIPPISVSENHKR) constitute a propeptide that is removed on maturation. Cadherin domains follow at residues 61–152 (LPYP…RPAF), 153–260 (LQEA…APEF), 261–375 (TRDE…PPVF), 376–481 (QENP…DHAP), and 482–590 (VLAP…VCLP). Topologically, residues 61–606 (LPYPLVQIKS…AGGTGLSLGA (546 aa)) are extracellular. N227 is a glycosylation site (N-linked (GlcNAc...) asparagine). N531, N538, and N576 each carry an N-linked (GlcNAc...) asparagine glycan. A helical membrane pass occupies residues 607–626 (LVIVLASALLLLVLVLLVAL). Over 627–814 (RARFWKQSRG…LLPRHRGRTA (188 aa)) the chain is Cytoplasmic. 2 disordered regions span residues 636 to 663 (GKGLLHGPQDDLRDNVLNYDEQGGGEED) and 676 to 703 (TALSLPLGPPPLRRDAPQGRLHPQPPRV).

In terms of tissue distribution, expressed in the brain and cerebellum.

It localises to the cell membrane. Cadherins are calcium-dependent cell adhesion proteins. They preferentially interact with themselves in a homophilic manner in connecting cells; cadherins may thus contribute to the sorting of heterogeneous cell types. M-cadherin is part of the myogenic program and may provide a trigger for terminal muscle differentiation. In Homo sapiens (Human), this protein is Cadherin-15 (CDH15).